The chain runs to 336 residues: uncharacterized protein (336 aa).

2 disordered regions span residues 29 to 93 and 116 to 147; these read GGVS…HSGA and LQER…GVTG. Composition is skewed to polar residues over residues 70 to 82 and 125 to 141; these read SGGS…TSTA and PWRT…SQPH.

This is an uncharacterized protein from Bos taurus (Bovine).